The sequence spans 294 residues: UDP-3-O-acyl-N-acetylglucosamine deacetylase (294 aa).

3 residues coordinate Zn(2+): His-75, His-232, and Asp-236. The active-site Proton donor is His-259.

The protein belongs to the LpxC family. It depends on Zn(2+) as a cofactor.

The catalysed reaction is a UDP-3-O-[(3R)-3-hydroxyacyl]-N-acetyl-alpha-D-glucosamine + H2O = a UDP-3-O-[(3R)-3-hydroxyacyl]-alpha-D-glucosamine + acetate. It functions in the pathway glycolipid biosynthesis; lipid IV(A) biosynthesis; lipid IV(A) from (3R)-3-hydroxytetradecanoyl-[acyl-carrier-protein] and UDP-N-acetyl-alpha-D-glucosamine: step 2/6. In terms of biological role, catalyzes the hydrolysis of UDP-3-O-myristoyl-N-acetylglucosamine to form UDP-3-O-myristoylglucosamine and acetate, the committed step in lipid A biosynthesis. The chain is UDP-3-O-acyl-N-acetylglucosamine deacetylase from Sulfurovum sp. (strain NBC37-1).